We begin with the raw amino-acid sequence, 364 residues long: Chaperone protein DnaJ (364 aa).

A J domain is found at 5–71 (DYYEILGVAK…QKRQAYDQFG (67 aa)). The CR-type zinc-finger motif lies at 127-205 (GSTVKIRIPK…CRGQGLVRKQ (79 aa)). Zn(2+) is bound by residues cysteine 140, cysteine 143, cysteine 157, cysteine 160, cysteine 179, cysteine 182, cysteine 193, and cysteine 196. CXXCXGXG motif repeat units follow at residues 140 to 147 (CDTCSGIG), 157 to 164 (CSICSGVG), 179 to 186 (CGTCSGTG), and 193 to 200 (CGTCRGQG).

Belongs to the DnaJ family. Homodimer. The cofactor is Zn(2+).

It is found in the cytoplasm. Functionally, participates actively in the response to hyperosmotic and heat shock by preventing the aggregation of stress-denatured proteins and by disaggregating proteins, also in an autonomous, DnaK-independent fashion. Unfolded proteins bind initially to DnaJ; upon interaction with the DnaJ-bound protein, DnaK hydrolyzes its bound ATP, resulting in the formation of a stable complex. GrpE releases ADP from DnaK; ATP binding to DnaK triggers the release of the substrate protein, thus completing the reaction cycle. Several rounds of ATP-dependent interactions between DnaJ, DnaK and GrpE are required for fully efficient folding. Also involved, together with DnaK and GrpE, in the DNA replication of plasmids through activation of initiation proteins. The polypeptide is Chaperone protein DnaJ (Ruthia magnifica subsp. Calyptogena magnifica).